Reading from the N-terminus, the 354-residue chain is Fructose-1,6-bisphosphatase class 1 (354 aa).

Glu112, Asp134, Leu136, and Asp137 together coordinate Mg(2+). Substrate contacts are provided by residues 137–140, Asn229, Tyr257, and Lys287; that span reads DGSS. Glu293 contacts Mg(2+).

Belongs to the FBPase class 1 family. In terms of assembly, homotetramer. Requires Mg(2+) as cofactor.

The protein localises to the cytoplasm. It carries out the reaction beta-D-fructose 1,6-bisphosphate + H2O = beta-D-fructose 6-phosphate + phosphate. The protein operates within carbohydrate biosynthesis; Calvin cycle. The polypeptide is Fructose-1,6-bisphosphatase class 1 (Trichodesmium erythraeum (strain IMS101)).